The sequence spans 319 residues: Shiga-like toxin 2 subunit A (319 aa).

Residues 1–22 form the signal peptide; that stretch reads MKCILFKWVLCLLLGFSSVSYS. The segment at 23-272 is A1; that stretch reads REFTIDFSTQ…CHHQGARSVR (250 aa). Glu189 is a catalytic residue. Cys263 and Cys282 form a disulfide bridge. Residues 273–314 are A2; it reads AVNEESQPECQITGDRPVIKINNTLWESNTAAAFLNRKSQFL.

Belongs to the ribosome-inactivating protein family. Shiga-like toxin contains a single A subunit and multiple copies of a B subunit.

Its subcellular location is the secreted. The enzyme catalyses Endohydrolysis of the N-glycosidic bond at one specific adenosine on the 28S rRNA.. Its function is as follows. The A subunit is responsible for inhibiting protein synthesis through the catalytic inactivation of 60S ribosomal subunits. After endocytosis, the A subunit is cleaved by furin in two fragments, A1 and A2: A1 is the catalytically active fragment, and A2 is essential for holotoxin assembly with the B subunits. This chain is Shiga-like toxin 2 subunit A (stxA2), found in Escherichia coli O157:H7 (Bacteriophage 933W).